The following is a 249-amino-acid chain: Acidic leucine-rich nuclear phosphoprotein 32 family member A (249 aa).

Threonine 15 carries the phosphothreonine modification. A Phosphoserine modification is found at serine 17. LRR repeat units follow at residues 18–41, 43–64, 65–87, and 89–110; these read DVKELVLDNCRSIEGKIEGLTDEF, ELEFLSTINVGLTSVANLPKLN, KLKKLELSDNRISGGLEVLAEKC, and NLTHLNLSGNKIKDLSTIEPLK. Residues 123 to 161 form the LRRCT domain; it reads CEVTNLNDYRENVFKLLPQLTYLDGYDRDDKEAPDSDAE. Residues 147–156 show a composition bias toward basic and acidic residues; it reads GYDRDDKEAP. The interval 147-249 is disordered; sequence GYDRDDKEAP…EPXDXGEDDD (103 aa). Residues 150–174 form a necessary for tumor-suppressive function region; sequence RDDKEAPDSDAEGYVEGLDDDEEDE. Positions 157–230 are enriched in acidic residues; sequence DSDAEGYVEG…DEEDEEDVGE (74 aa). Serine 158 and serine 204 each carry phosphoserine. Residues 165-249 are interaction with E4F1; it reads EGLDDDEEDE…EPXDXGEDDD (85 aa).

This sequence belongs to the ANP32 family. As to quaternary structure, component of the SET complex, composed of at least ANP32A, APEX1, HMGB2, NME1, SET and TREX1. Directly interacts with SET. Interacts with ATXN1/SCA1. Interacts with MAP1B. Interacts with ELAVL1. Part of the INHAT (inhibitor of histone acetyltransferases) complex. Interacts with E4F1. Post-translationally, phosphorylated on serine residues, at least in part by casein kinase 2/CK2. In terms of processing, some glutamate residues are glycylated by TTLL8. This modification occurs exclusively on glutamate residues and results in a glycine chain on the gamma-carboxyl group.

The protein localises to the nucleus. It localises to the cytoplasm. It is found in the endoplasmic reticulum. Functionally, multifunctional protein that is involved in the regulation of many processes including tumor suppression, apoptosis, cell cycle progression or transcription. Promotes apoptosis by favouring the activation of caspase-9/CASP9 and allowing apoptosome formation. In addition, plays a role in the modulation of histone acetylation and transcription as part of the INHAT (inhibitor of histone acetyltransferases) complex. Inhibits the histone-acetyltranferase activity of EP300/CREBBP (CREB-binding protein) and EP300/CREBBP-associated factor by histone masking. Preferentially binds to unmodified histone H3 and sterically inhibiting its acetylation and phosphorylation leading to cell growth inhibition. Participates in other biochemical processes such as regulation of mRNA nuclear-to-cytoplasmic translocation and stability by its association with ELAVL1 (Hu-antigen R). Plays a role in E4F1-mediated transcriptional repression as well as inhibition of protein phosphatase 2A. The chain is Acidic leucine-rich nuclear phosphoprotein 32 family member A (ANP32A) from Canis lupus familiaris (Dog).